A 356-amino-acid polypeptide reads, in one-letter code: Protein disulfide isomerase crld-1 (356 aa).

The N-terminal stretch at Met1–Gln17 is a signal peptide. Topologically, residues Lys18–Gln299 are lumenal. A CXXC motif is present at residues Cys27 to Cys30. A disulfide bridge connects residues Cys27 and Cys30. The N-linked (GlcNAc...) asparagine glycan is linked to Asn122. The 39-residue stretch at Gly150–Arg188 folds into the EGF-like 1 domain. Intrachain disulfides connect Cys158/Cys176, Cys178/Cys187, Cys245/Cys258, Cys251/Cys267, and Cys269/Cys281. The 42-residue stretch at Asp241–Gln282 folds into the EGF-like 2; calcium-binding domain. Asn247 carries an N-linked (GlcNAc...) asparagine glycan. The helical transmembrane segment at Leu300–Trp317 threads the bilayer. The Cytoplasmic portion of the chain corresponds to His318–Pro321. Residues Val322–Val341 form a helical membrane-spanning segment. Residues Asn342 to Tyr356 lie on the Lumenal side of the membrane.

This sequence belongs to the CRELD family. In terms of assembly, interacts with unc-29. As to expression, isoforms a: Widely expressed in tissues including body wall muscles, neurons, pharynx, hypodermis, seam cells, intestine and gonad. Isoform b: Widely expressed in tissues including body wall muscles, neurons, pharynx, hypodermis, seam cells, intestine and gonad.

The protein resides in the endoplasmic reticulum membrane. Its subcellular location is the endoplasmic reticulum lumen. The catalysed reaction is Catalyzes the rearrangement of -S-S- bonds in proteins.. In terms of biological role, protein disulfide isomerase which associates with the unc-29 subunit of levamisole-sensitive nicotinic acetylcholine receptors (L-nAChR) to promote L-nAChR assembly in the endoplasmic reticulum at neuromuscular junctions. Functionally, promotes L-nAChR assembly in the endoplasmic reticulum at neuromuscular junctions. This Caenorhabditis elegans protein is Protein disulfide isomerase crld-1.